We begin with the raw amino-acid sequence, 270 residues long: MPSSFDLLGEMIDLLQTEQLTSYWACPLPNALTKRQDLWRALINQRPALPLSKDYLNLEDTYLDDWRASFVPVSVKDCQKTNYTSLFLYHGDIRYLAVDAIVNAANSELLGCFIPNHGCIDNAIHTFAGSRLRLACQAIMTEQGRKEAIGQAKLTSAYHLPASYIIHTVGPRITKGRHVSPIRADLLARCYRSSLDLAVKAGLTSLAFCSISTGEFGFPKKEAAQIAIKTVLKWQAEHPESKTLTIIFNTFTSEDKALYDTYLQKENNCE.

One can recognise a Macro domain in the interval V73–N267. Positions 92, 93, and 106 each coordinate ADP-D-ribose. Residues C112, H117, and C119 each coordinate Zn(2+). C119, I120, D121, S212, T213, G214, E215, and F216 together coordinate ADP-D-ribose.

Belongs to the MacroD-type family. Zn-Macro subfamily. As to quaternary structure, monomer. Interacts with the lipoylated form of GcvH-L. Requires Zn(2+) as cofactor.

It carries out the reaction 4-O-(ADP-D-ribosyl)-L-aspartyl-[protein] + H2O = L-aspartyl-[protein] + ADP-D-ribose + H(+). It catalyses the reaction 5-O-(ADP-D-ribosyl)-L-glutamyl-[protein] + H2O = L-glutamyl-[protein] + ADP-D-ribose + H(+). The enzyme catalyses S-(ADP-D-ribosyl)-L-cysteinyl-[protein] + H2O = ADP-D-ribose + L-cysteinyl-[protein]. Its function is as follows. ADP-ribosylhydrolase that specifically reverses the SirTM-mediated mono-ADP-ribosylation at an asparatate residue of GcvH-L (SpyM50867), by releasing ADP-ribose from the target protein. May play a role in the regulation of the response to host-induced oxidative stress. It can also hydrolyze ADP-ribosyl-glutamate bonds and ADP-ribosyl-cysteine bonds. In vitro, it can remove the ADP-ribosyl modification from the human mono-ADP-ribosylated PARP1 E988Q mutant, which is primarily modified on glutamate site with only minor aspartate contribution. It can also hydrolyze the ADP-ribosyl-cysteinyl glycosidic bond of a Cys-ADP-ribosylated synthetic peptide. This Streptococcus pyogenes serotype M5 (strain Manfredo) protein is Protein-ADP-ribose hydrolase.